The following is a 209-amino-acid chain: Large ribosomal subunit protein uL3 (209 aa).

At Q150 the chain carries N5-methylglutamine.

This sequence belongs to the universal ribosomal protein uL3 family. In terms of assembly, part of the 50S ribosomal subunit. Forms a cluster with proteins L14 and L19. Post-translationally, methylated by PrmB.

Functionally, one of the primary rRNA binding proteins, it binds directly near the 3'-end of the 23S rRNA, where it nucleates assembly of the 50S subunit. In Photobacterium profundum (strain SS9), this protein is Large ribosomal subunit protein uL3.